We begin with the raw amino-acid sequence, 462 residues long: Ammonium transporter Rh type B (462 aa).

Residues 1–11 (MTDPSTNMRLK) are Cytoplasmic-facing. The chain crosses the membrane as a helical span at residues 12–32 (LPITCFILQIILIILFGVLVQ). The Extracellular segment spans residues 33–62 (YDEDTDAKKHHHGNHSESKSDIENDFYYRY). Asparagine 46 carries an N-linked (GlcNAc...) asparagine glycan. A helical transmembrane segment spans residues 63–83 (PSFQDVHVMIFVGFGFLMTFL). The Cytoplasmic portion of the chain corresponds to 84–94 (QRYGFSSVGFN). The helical transmembrane segment at 95–115 (FLIAAFSLQWATLMQGFFHGL) threads the bilayer. Over 116-125 (HEGKIHIGVE) the chain is Extracellular. A helical membrane pass occupies residues 126–146 (SMINADFCTGSVLISFGAVLG). Topologically, residues 147–152 (KTSPVQ) are cytoplasmic. Residues 153–173 (LLFMAVFEVTLFAVNEFILLT) form a helical membrane-spanning segment. Residues 174-180 (LLGTKDA) lie on the Extracellular side of the membrane. A helical transmembrane segment spans residues 181–201 (GGSMTIHTFGAYFGLMVTRIL). Topologically, residues 202-220 (YRPNLDKSKHKNCSVYHSD) are cytoplasmic. A helical membrane pass occupies residues 221–241 (LFAMIGTLYLWMFWPSFNSAV). The Extracellular portion of the chain corresponds to 242–302 (TEHGDPQHRT…VAAGTAGEMM (61 aa)). A helical membrane pass occupies residues 303–323 (LTPFGSMIVGFLAGIISVLGF). Topologically, residues 324–344 (KYLTPILENKLKIQDTCGIHN) are cytoplasmic. The helical transmembrane segment at 345-365 (LHGMPGVLGAIVGAVTASLAS) threads the bilayer. The Extracellular portion of the chain corresponds to 366–395 (KEVYGEGLEKVFPDVASGKRTASDQGGVQA). Residues 396–416 (ISLAVTLGMALFGGLIVGFIL) form a helical membrane-spanning segment. The Cytoplasmic segment spans residues 417–462 (KLPIFGAPRDTTCFEDSLYWEVPGEEESHEDQLTTVKTEESDKLNS). The interval 441–462 (EEESHEDQLTTVKTEESDKLNS) is disordered. The segment covering 453 to 462 (KTEESDKLNS) has biased composition (basic and acidic residues).

This sequence belongs to the ammonium transporter (TC 2.A.49) family. Rh subfamily.

It localises to the basolateral cell membrane. The protein resides in the cytoplasmic vesicle membrane. Functions as an ammonia transporter. May play a role in the elimination of ammonia in the gill. This Oryzias latipes (Japanese rice fish) protein is Ammonium transporter Rh type B (rhbg).